Reading from the N-terminus, the 309-residue chain is Vomeronasal type-1 receptor 52 (309 aa).

At 1–19 the chain is on the extracellular side; the sequence is MNKDHTLYCSVYIRNAFFS. The chain crosses the membrane as a helical span at residues 20–40; the sequence is EIGIGISANSCLLLFHTFMFI. The Cytoplasmic segment spans residues 41 to 49; it reads RGHRPRLTD. A helical membrane pass occupies residues 50-70; that stretch reads LPIGFVALIHLVMLLLAAYIT. At 71 to 93 the chain is on the extracellular side; it reads EDFFMSSGGWDDITCKLVIFLHR. Residues Cys-85 and Cys-172 are joined by a disulfide bond. The helical transmembrane segment at 94–114 threads the bilayer; the sequence is FFRSLSVCATCLLSVFQAIIL. The Cytoplasmic portion of the chain corresponds to 115-134; the sequence is CPQSSHLAKLKQNSPHQLSY. The helical transmembrane segment at 135–155 threads the bilayer; it reads FFIFLSIFYTSISSHILIAAI. Residues 156–187 lie on the Extracellular side of the membrane; it reads PTQNITFVNLIYITNSCSFLPLSSSMQHTFST. An N-linked (GlcNAc...) asparagine glycan is attached at Asn-159. The chain crosses the membrane as a helical span at residues 188–208; it reads LLAFRNVFVIGLMGLSTCYMA. Over 209 to 238 the chain is Cytoplasmic; sequence TLLCRHKTRSQRLQNSKLSPKATPEQRALR. A helical membrane pass occupies residues 239–259; the sequence is TILMLMSFFLLMSTFDSIISY. Topologically, residues 260–268 are extracellular; it reads SRTILQGNP. Residues 269–289 form a helical membrane-spanning segment; the sequence is LPFCFQILVAHSYAAVSPLLV. Topologically, residues 290-309 are cytoplasmic; it reads LSNEKRITNLLISMYEKIVL.

This sequence belongs to the G-protein coupled receptor 1 family.

Its subcellular location is the cell membrane. Functionally, putative pheromone receptor implicated in the regulation of social and reproductive behavior. The polypeptide is Vomeronasal type-1 receptor 52 (Vmn1r52) (Mus musculus (Mouse)).